Consider the following 286-residue polypeptide: MRDSRETFVNHAFVAGYPVKHSRSPLIHGYWLKRFGIQGSYRAHEVTSDAFPDFMRQIKEGTAGFCGGNVTIPHKEAAFRLSDRPDELSAELGAANTLWLENGTIRATNTDGRGFVANLDERAKGWDRISAAVILGAGGASRAVIQAIRDRGVKAIHVVNRTPERARELADRFGSAVHAHSMAALPEVLSGAGLFVNTTSLGMDGEPAPAIDFSKLARDAVVTDIVYVPLKTPLLRQAEEQGFRVVDGLGMLLHQAAPGFEKWFGLRPVVDEALREIIISDMDKHA.

Shikimate contacts are provided by residues 22–24 and Thr-71; that span reads SRS. Lys-75 acts as the Proton acceptor in catalysis. NADP(+) is bound at residue Glu-87. Positions 96 and 111 each coordinate shikimate. NADP(+) is bound by residues 136–140, 160–165, and Ile-225; these read GAGGA and NRTPER. Residue Tyr-227 coordinates shikimate. NADP(+) is bound at residue Gly-248.

It belongs to the shikimate dehydrogenase family. As to quaternary structure, homodimer.

The enzyme catalyses shikimate + NADP(+) = 3-dehydroshikimate + NADPH + H(+). The protein operates within metabolic intermediate biosynthesis; chorismate biosynthesis; chorismate from D-erythrose 4-phosphate and phosphoenolpyruvate: step 4/7. In terms of biological role, involved in the biosynthesis of the chorismate, which leads to the biosynthesis of aromatic amino acids. Catalyzes the reversible NADPH linked reduction of 3-dehydroshikimate (DHSA) to yield shikimate (SA). The chain is Shikimate dehydrogenase (NADP(+)) from Sinorhizobium medicae (strain WSM419) (Ensifer medicae).